A 392-amino-acid polypeptide reads, in one-letter code: ATP phosphoribosyltransferase regulatory subunit (392 aa).

The protein belongs to the class-II aminoacyl-tRNA synthetase family. HisZ subfamily. In terms of assembly, heteromultimer composed of HisG and HisZ subunits.

Its subcellular location is the cytoplasm. Its pathway is amino-acid biosynthesis; L-histidine biosynthesis; L-histidine from 5-phospho-alpha-D-ribose 1-diphosphate: step 1/9. Functionally, required for the first step of histidine biosynthesis. May allow the feedback regulation of ATP phosphoribosyltransferase activity by histidine. This chain is ATP phosphoribosyltransferase regulatory subunit, found in Gloeobacter violaceus (strain ATCC 29082 / PCC 7421).